Reading from the N-terminus, the 341-residue chain is N-acetyl-gamma-glutamyl-phosphate reductase (341 aa).

Cysteine 145 is a catalytic residue.

Belongs to the NAGSA dehydrogenase family. Type 1 subfamily.

The protein resides in the cytoplasm. The catalysed reaction is N-acetyl-L-glutamate 5-semialdehyde + phosphate + NADP(+) = N-acetyl-L-glutamyl 5-phosphate + NADPH + H(+). Its pathway is amino-acid biosynthesis; L-arginine biosynthesis; N(2)-acetyl-L-ornithine from L-glutamate: step 3/4. Functionally, catalyzes the NADPH-dependent reduction of N-acetyl-5-glutamyl phosphate to yield N-acetyl-L-glutamate 5-semialdehyde. In Methanothrix thermoacetophila (strain DSM 6194 / JCM 14653 / NBRC 101360 / PT) (Methanosaeta thermophila), this protein is N-acetyl-gamma-glutamyl-phosphate reductase.